A 172-amino-acid polypeptide reads, in one-letter code: Adenine phosphoribosyltransferase (172 aa).

Belongs to the purine/pyrimidine phosphoribosyltransferase family. As to quaternary structure, homodimer.

The protein resides in the cytoplasm. The enzyme catalyses AMP + diphosphate = 5-phospho-alpha-D-ribose 1-diphosphate + adenine. Its pathway is purine metabolism; AMP biosynthesis via salvage pathway; AMP from adenine: step 1/1. Its function is as follows. Catalyzes a salvage reaction resulting in the formation of AMP, that is energically less costly than de novo synthesis. This Exiguobacterium sibiricum (strain DSM 17290 / CCUG 55495 / CIP 109462 / JCM 13490 / 255-15) protein is Adenine phosphoribosyltransferase.